The primary structure comprises 390 residues: MPPSGLRLLPLLLPLLWLLMLTPGRPVAGLSTCKTIDMELVKRKGIEAIRGQILSKLRLASPPSQGDVPPGPLPEAILALYNSTRDRVAGESAETEPEPEADYYAKEVTRVLMVEYGNKIYDKMKSSSHSIYMFFNTSELREAVPEPVLLSRADVRLLRLKLKVEQHVELYQKYSNNSWRYLSNRLLAPSDSPEWLSFDVTGVVRQWLTHREEIEGFRLSAHCSCDSKDNTLQVDINGFSSGRRGDLATIHGMNRPFLLLMATPLERAQHLHSSRHRRALDTNYCFSSTEKNCCVRQLYIDFRKDLGWKWIHEPKGYHANFCLGPCPYIWSLDTQYSKVLALYNQHNPGASAAPCCVPQALEPLPIVYYVGRKPKVEQLSNMIVRSCKCS.

An N-terminal signal peptide occupies residues 1–29 (MPPSGLRLLPLLLPLLWLLMLTPGRPVAG). Positions 30 to 74 (LSTCKTIDMELVKRKGIEAIRGQILSKLRLASPPSQGDVPPGPLP) are straightjacket domain. The segment at 75–271 (EAILALYNST…ATPLERAQHL (197 aa)) is arm domain. Residues Asn-82, Asn-136, and Asn-176 are each glycosylated (N-linked (GlcNAc...) asparagine). Residues 226 to 252 (DSKDNTLQVDINGFSSGRRGDLATIHG) are bowtie tail. Positions 244–246 (RGD) match the Cell attachment site motif. 4 disulfides stabilise this stretch: Cys-285-Cys-294, Cys-293-Cys-356, Cys-322-Cys-387, and Cys-326-Cys-389.

This sequence belongs to the TGF-beta family. In terms of assembly, homodimer; disulfide-linked. Interacts with the serine proteases, HTRA1 and HTRA3: the interaction with either inhibits TGFB1-mediated signaling and the HTRA protease activity is required for this inhibition. May interact with THSD4; this interaction may lead to sequestration by FBN1 microfibril assembly and attenuation of TGFB signaling. Interacts with CD109, DPT and ASPN. Interacts with EFEMP2. Interacts with TSKU; the interaction contributes to regulation of the hair cycle. Interacts with TGFBR3. As to quaternary structure, homodimer; disulfide-linked. Interacts with transforming growth factor beta-1 (TGF-beta-1) chain; interaction is non-covalent and maintains TGF-beta-1 in a latent state; each latency-associated peptide (LAP) monomer interacts with TGF-beta-1 in the other monomer. Interacts with LTBP1; leading to regulation of TGF-beta-1 activation. Interacts with LRRC32/GARP; leading to regulation of TGF-beta-1 activation on the surface of activated regulatory T-cells (Tregs). Interacts with LRRC33/NRROS; leading to regulation of TGF-beta-1 activation in macrophages and microglia. Interacts (via cell attachment site) with integrins ITGAV and ITGB6 (ITGAV:ITGB6), leading to release of the active TGF-beta-1. Interacts with NREP; the interaction results in a decrease in TGFB1 autoinduction. Interacts with HSP90AB1; inhibits latent TGFB1 activation. Homodimer; disulfide-linked. Interacts with TGF-beta receptors (TGFBR1 and TGFBR2), leading to signal transduction. Post-translationally, transforming growth factor beta-1 proprotein: The precursor proprotein is cleaved in the Golgi apparatus by FURIN to form Transforming growth factor beta-1 (TGF-beta-1) and Latency-associated peptide (LAP) chains, which remain non-covalently linked, rendering TGF-beta-1 inactive. In terms of processing, N-glycosylated. Deglycosylation leads to activation of Transforming growth factor beta-1 (TGF-beta-1); mechanisms triggering deglycosylation-driven activation of TGF-beta-1 are however unclear.

The protein resides in the secreted. Its subcellular location is the extracellular space. The protein localises to the extracellular matrix. Transforming growth factor beta-1 proprotein: Precursor of the Latency-associated peptide (LAP) and Transforming growth factor beta-1 (TGF-beta-1) chains, which constitute the regulatory and active subunit of TGF-beta-1, respectively. Functionally, required to maintain the Transforming growth factor beta-1 (TGF-beta-1) chain in a latent state during storage in extracellular matrix. Associates non-covalently with TGF-beta-1 and regulates its activation via interaction with 'milieu molecules', such as LTBP1, LRRC32/GARP and LRRC33/NRROS, that control activation of TGF-beta-1. Interaction with LRRC33/NRROS regulates activation of TGF-beta-1 in macrophages and microglia. Interaction with LRRC32/GARP controls activation of TGF-beta-1 on the surface of activated regulatory T-cells (Tregs). Interaction with integrins (ITGAV:ITGB6 or ITGAV:ITGB8) results in distortion of the Latency-associated peptide chain and subsequent release of the active TGF-beta-1. Its function is as follows. Multifunctional protein that regulates the growth and differentiation of various cell types and is involved in various processes, such as normal development, immune function, microglia function and responses to neurodegeneration. Activation into mature form follows different steps: following cleavage of the proprotein in the Golgi apparatus, Latency-associated peptide (LAP) and Transforming growth factor beta-1 (TGF-beta-1) chains remain non-covalently linked rendering TGF-beta-1 inactive during storage in extracellular matrix. At the same time, LAP chain interacts with 'milieu molecules', such as LTBP1, LRRC32/GARP and LRRC33/NRROS that control activation of TGF-beta-1 and maintain it in a latent state during storage in extracellular milieus. TGF-beta-1 is released from LAP by integrins (ITGAV:ITGB6 or ITGAV:ITGB8): integrin-binding to LAP stabilizes an alternative conformation of the LAP bowtie tail and results in distortion of the LAP chain and subsequent release of the active TGF-beta-1. Once activated following release of LAP, TGF-beta-1 acts by binding to TGF-beta receptors (TGFBR1 and TGFBR2), which transduce signal. While expressed by many cells types, TGF-beta-1 only has a very localized range of action within cell environment thanks to fine regulation of its activation by Latency-associated peptide chain (LAP) and 'milieu molecules'. Plays an important role in bone remodeling: acts as a potent stimulator of osteoblastic bone formation, causing chemotaxis, proliferation and differentiation in committed osteoblasts. Can promote either T-helper 17 cells (Th17) or regulatory T-cells (Treg) lineage differentiation in a concentration-dependent manner. At high concentrations, leads to FOXP3-mediated suppression of RORC and down-regulation of IL-17 expression, favoring Treg cell development. At low concentrations in concert with IL-6 and IL-21, leads to expression of the IL-17 and IL-23 receptors, favoring differentiation to Th17 cells. Stimulates sustained production of collagen through the activation of CREB3L1 by regulated intramembrane proteolysis (RIP). Mediates SMAD2/3 activation by inducing its phosphorylation and subsequent translocation to the nucleus. Positively regulates odontoblastic differentiation in dental papilla cells, via promotion of IPO7-mediated translocation of phosphorylated SMAD2 to the nucleus and subsequent transcription of target genes. Can induce epithelial-to-mesenchymal transition (EMT) and cell migration in various cell types. The chain is Transforming growth factor beta-1 proprotein (TGFB1) from Ovis aries (Sheep).